Consider the following 175-residue polypeptide: B9 domain-containing protein 2 (175 aa).

Positions 2–118 (AELHIIGQII…QCVTWRPLGS (117 aa)) constitute a C2 B9-type domain.

It belongs to the B9D family. In terms of assembly, part of the tectonic-like complex (also named B9 complex).

It localises to the cytoplasm. It is found in the cytoskeleton. The protein localises to the cilium basal body. Its subcellular location is the cilium axoneme. In terms of biological role, component of the tectonic-like complex, a complex localized at the transition zone of primary cilia and acting as a barrier that prevents diffusion of transmembrane proteins between the cilia and plasma membranes. This Danio rerio (Zebrafish) protein is B9 domain-containing protein 2 (b9d2).